Here is a 302-residue protein sequence, read N- to C-terminus: Stanniocalcin-2 (302 aa).

The N-terminal stretch at 1–24 (MCAERLGQFMTLALVLATFDPARG) is a signal peptide. Residues 23-44 (RGTDATNPPEGPQDRSPQQKGR) are disordered. N-linked (GlcNAc...) asparagine glycosylation is found at Asn73 and Asn74. Positions 217-302 (RPPTAPPERQ…EQSEYSDIRR (86 aa)) are disordered. The span at 227–264 (PQVDRTKLSRAHHGEAGHHLPEPSSRETGRGAKGERGS) shows a compositional bias: basic and acidic residues. Phosphoserine is present on residues Ser250 and Ser251. Position 254 is a phosphothreonine (Thr254).

Belongs to the stanniocalcin family. As to quaternary structure, homodimer; disulfide-linked.

The protein resides in the secreted. Has an anti-hypocalcemic action on calcium and phosphate homeostasis. The sequence is that of Stanniocalcin-2 (STC2) from Pongo abelii (Sumatran orangutan).